Reading from the N-terminus, the 153-residue chain is Aspartate carbamoyltransferase regulatory chain (153 aa).

Zn(2+) contacts are provided by Cys109, Cys114, Cys138, and Cys141.

It belongs to the PyrI family. Contains catalytic and regulatory chains. Zn(2+) serves as cofactor.

In terms of biological role, involved in allosteric regulation of aspartate carbamoyltransferase. The chain is Aspartate carbamoyltransferase regulatory chain from Salmonella paratyphi A (strain ATCC 9150 / SARB42).